We begin with the raw amino-acid sequence, 347 residues long: Beta-hexosaminidase (347 aa).

Residues Asp64, Arg72, Arg138, and 168–169 (KH) each bind substrate. Catalysis depends on His181, which acts as the Proton donor/acceptor. Asp251 acts as the Nucleophile in catalysis.

Belongs to the glycosyl hydrolase 3 family. NagZ subfamily.

It localises to the cytoplasm. It carries out the reaction Hydrolysis of terminal non-reducing N-acetyl-D-hexosamine residues in N-acetyl-beta-D-hexosaminides.. The protein operates within cell wall biogenesis; peptidoglycan recycling. Functionally, plays a role in peptidoglycan recycling by cleaving the terminal beta-1,4-linked N-acetylglucosamine (GlcNAc) from peptide-linked peptidoglycan fragments, giving rise to free GlcNAc, anhydro-N-acetylmuramic acid and anhydro-N-acetylmuramic acid-linked peptides. This chain is Beta-hexosaminidase, found in Thioalkalivibrio sulfidiphilus (strain HL-EbGR7).